A 427-amino-acid polypeptide reads, in one-letter code: Glutamyl-tRNA reductase (427 aa).

Substrate-binding positions include Thr-49–Arg-52, Ser-109, Glu-114–Gln-116, and Gln-120. Cys-50 serves as the catalytic Nucleophile. Gly-188–Ala-193 contacts NADP(+).

Belongs to the glutamyl-tRNA reductase family. As to quaternary structure, homodimer.

The enzyme catalyses (S)-4-amino-5-oxopentanoate + tRNA(Glu) + NADP(+) = L-glutamyl-tRNA(Glu) + NADPH + H(+). The protein operates within porphyrin-containing compound metabolism; protoporphyrin-IX biosynthesis; 5-aminolevulinate from L-glutamyl-tRNA(Glu): step 1/2. It functions in the pathway porphyrin-containing compound metabolism; chlorophyll biosynthesis. Feedback inhibition by heme. In terms of biological role, catalyzes the NADPH-dependent reduction of glutamyl-tRNA(Glu) to glutamate 1-semialdehyde (GSA). The polypeptide is Glutamyl-tRNA reductase (Synechocystis sp. (strain ATCC 27184 / PCC 6803 / Kazusa)).